Here is a 202-residue protein sequence, read N- to C-terminus: Protein Thf1 (202 aa).

Positions 174–202 form a coiled coil; it reads IYKSSILKMEQAKELLQEAKIKDKKEKKK.

This sequence belongs to the THF1 family.

Functionally, may be involved in photosynthetic membrane biogenesis. This Prochlorococcus marinus subsp. pastoris (strain CCMP1986 / NIES-2087 / MED4) protein is Protein Thf1.